The primary structure comprises 118 residues: UPF0148 protein LS215_1455 (118 aa).

This sequence belongs to the UPF0148 family.

The chain is UPF0148 protein LS215_1455 from Saccharolobus islandicus (strain L.S.2.15 / Lassen #1) (Sulfolobus islandicus).